We begin with the raw amino-acid sequence, 311 residues long: Cytosolic Fe-S cluster assembly factor Nubp1 homolog (311 aa).

Positions 9, 23, 26, and 32 each coordinate [4Fe-4S] cluster. An ATP-binding site is contributed by 63–70 (GKGGVGKS). [4Fe-4S] cluster is bound by residues Cys-241 and Cys-244.

The protein belongs to the Mrp/NBP35 ATP-binding proteins family. NUBP1/NBP35 subfamily. As to quaternary structure, heterotetramer of 2 Nubp1 and 2 Nubp2 chains. It depends on [4Fe-4S] cluster as a cofactor.

The protein localises to the cytoplasm. Functionally, component of the cytosolic iron-sulfur (Fe/S) protein assembly (CIA) machinery. Required for maturation of extramitochondrial Fe-S proteins. The Nubp1-Nubp2 heterotetramer forms a Fe-S scaffold complex, mediating the de novo assembly of an Fe-S cluster and its transfer to target apoproteins. The protein is Cytosolic Fe-S cluster assembly factor Nubp1 homolog of Drosophila grimshawi (Hawaiian fruit fly).